The sequence spans 163 residues: Extracellular giant hemoglobin major globin subunit B2 (163 aa).

The first 16 residues, 1 to 16 (MIALFVLMGLMAAASA), serve as a signal peptide directing secretion. Residues 19 to 163 (CCSSEDRANV…RIANGISAGL (145 aa)) form the Globin domain. C20 and C151 are disulfide-bonded. Position 83 (C83) interacts with hydrogen sulfide. H114 lines the heme b pocket.

This sequence belongs to the globin family. As to quaternary structure, the 400 kDa hemoglobin consists of a spherical 24-mer arranged as a double layer of dome-shaped dodecamers. Each dodecamer is composed of the 3-fold trimer of the tetramer A1-A2-B1-B2 having one intra-tetramer (A1-B2) disulfide bond and one inter-tetramer (B1-B2) disulfide bond per tetramer.

Its subcellular location is the secreted. Its function is as follows. The extracellular giant hemoglobin is able to bind and transport oxygen and hydrosulfide simultaneously and reversibly at two different sites. This is Extracellular giant hemoglobin major globin subunit B2 (ghbB2) from Oligobrachia mashikoi (Beard worm).